The following is a 62-amino-acid chain: Protein CYSTEINE-RICH TRANSMEMBRANE MODULE 2 (62 aa).

The next 2 helical transmembrane spans lie at 23-39 (VAVA…AAFD) and 33-53 (VVAA…LSLI).

This sequence belongs to the CYSTM1 family. As to quaternary structure, heterodimers. Binds weakly to CYSTM7 and WIH1/CYSTM13. Mostly expressed in stems, siliques, leaves and flowers and, to a lower extent, in roots.

The protein resides in the cell membrane. The protein localises to the nucleus. Its subcellular location is the secreted. It is found in the cell wall. Involved in resistance to abiotic stress. In terms of biological role, confers resistance to heavy metal ions (e.g. cadmium (CdCl(2)) and copper (CuCl(2))) by chelating them at the plasma membrane of root cells, thus stopping their entry and reducing their accumulation. The protein is Protein CYSTEINE-RICH TRANSMEMBRANE MODULE 2 of Arabidopsis thaliana (Mouse-ear cress).